A 925-amino-acid polypeptide reads, in one-letter code: MAACIGERIEDFKVGNLLGKGSFAGVYRAESIHTGLEVAIKMIDKKAMYKAGMVQRVQNEVKIHCQLKHPSVLELYNYFEDNNYVYLVLEMCHNGEMNRYLKNRMKPFSEREARHFMHQIITGMLYLHSHGILHRDLTLSNILLTRNMNIKIADFGLATQLNMPHEKHYTLCGTPNYISPEIATRSAHGLESDIWSLGCMFYTLLIGRPPFDTDTVKNTLNKVVLADYEMPAFLSREAQDLIHQLLRRNPADRLSLSSVLDHPFMSRNPSPKSKDVGTVEDSMDSGHATLSTTITASSGTSLSGSLLDRRLLVGQPLPNKITVFQKNKNSSDFSSGDGSNFCTQWGNPEQEANSRGRGRVIEDAEERPHSRYLRRAHSSDRASPSNQSRAKTYSVERCHSVEMLSKPRRSLDENQHSSNHHCLGKTPFPFADQTPQMEMVQQWFGNLQMNAHLGETNEHHTVSPNRDFQDYPDLQDTLRNAWTDTRASKNADTSANVHAVKQLSAMKYMSAHHHKPEVMPQEPGLHPHSEQSKNRSMESTLGYQKPTLRSITSPLIAHRLKPIRQKTKKAVVSILDSEEVCVELLRECASEGYVKEVLQISSDGTMITVYYPNDGRGFPLADRPPLPTDNISRYSFDNLPEKYWRKYQYASRFIQLVRSKTPKITYFTRYAKCILMENSPGADFEVWFYDGAKIHKTENLIHIIEKTGISYNLKNENEVTSLKEEVKVYMDHANEGHRICLSLESVISEEEKRSRGSSFFPIIVGRKPGNTSSPKALSAPPVDPSCCKGEQASASRLSVNSAAFPTQSPGLSPSTVTVEGLGHTATATGTGVSSSLPKSAQLLKSVFVKNVGWATQLTSGAVWVQFNDGSQLVVQAGVSSISYTSPDGQTTRYGENEKLPEYIKQKLQCLSSILLMFSNPTPNFQ.

The Protein kinase domain maps to 12–265; the sequence is FKVGNLLGKG…LSSVLDHPFM (254 aa). ATP contacts are provided by residues 18–26 and Lys-41; that span reads LGKGSFAGV. N6-acetyllysine occurs at positions 45 and 46. Asp-136 acts as the Proton acceptor in catalysis. Disordered stretches follow at residues 262-283 and 328-394; these read HPFM…EDSM and KNSS…KTYS. Low complexity predominate over residues 330-341; sequence SSDFSSGDGSNF. Residues 342–353 are compositionally biased toward polar residues; it reads CTQWGNPEQEAN. Residues 359–369 show a composition bias toward basic and acidic residues; that stretch reads RVIEDAEERPH. Residues 381 to 391 show a composition bias toward polar residues; that stretch reads RASPSNQSRAK. Position 400 is a phosphoserine (Ser-400). The segment at 517-538 is disordered; that stretch reads EVMPQEPGLHPHSEQSKNRSME. A compositionally biased stretch (basic and acidic residues) spans 525–536; that stretch reads LHPHSEQSKNRS. The Cryptic POLO box 1 (CPB1) domain maps to 547 to 660; that stretch reads TLRSITSPLI…SRFIQLVRSK (114 aa). In terms of domain architecture, Cryptic POLO box 2 (CPB2) spans 661-774; that stretch reads TPKITYFTRY…GRKPGNTSSP (114 aa). The residue at position 778 (Ser-778) is a Phosphoserine. Positions 841–919 constitute a POLO box domain; sequence QLLKSVFVKN…LSSILLMFSN (79 aa).

This sequence belongs to the protein kinase superfamily. Ser/Thr protein kinase family. CDC5/Polo subfamily. In terms of assembly, homodimer. Interacts with CEP152 (via N-terminus). Interacts with CEP78; this interaction may be important for proper PLK4 localization to the centriole and PLK4-induced overduplication of centrioles. Interacts with CEP131. Interacts simultaneously with TENT5C and CEP192. Interacts with TENT5C; this interaction leads to the TENT5C recruitment in the centrosome. Interacts with CEP85; this interaction may be important in cell migration and centriole assembly. In terms of processing, ubiquitinated; leading to its degradation by the proteasome. Deubiquitinated by USP54; leading to PLK4 stabilization. Post-translationally, tyrosine-phosphorylated by TEC. Acetylation by KAT2A and KAT2B impairs kinase activity by shifting the kinase to an inactive conformation. As to expression, expressed in tissues associated with mitotic and meiotic cell division. Highly expressed in testis.

It is found in the cytoplasm. Its subcellular location is the cytoskeleton. It localises to the microtubule organizing center. The protein localises to the centrosome. The protein resides in the centriole. It is found in the nucleus. Its subcellular location is the nucleolus. It localises to the cleavage furrow. It catalyses the reaction L-seryl-[protein] + ATP = O-phospho-L-seryl-[protein] + ADP + H(+). The catalysed reaction is L-threonyl-[protein] + ATP = O-phospho-L-threonyl-[protein] + ADP + H(+). Functionally, serine/threonine-protein kinase that plays a central role in centriole duplication. Able to trigger procentriole formation on the surface of the parental centriole cylinder, leading to the recruitment of centriole biogenesis proteins such as SASS6, CPAP, CCP110, CEP135 and gamma-tubulin. When overexpressed, it is able to induce centrosome amplification through the simultaneous generation of multiple procentrioles adjoining each parental centriole during S phase. Phosphorylates 'Ser-151' of FBXW5 during the G1/S transition, leading to inhibit FBXW5 ability to ubiquitinate SASS6. Its central role in centriole replication suggests a possible role in tumorigenesis, centrosome aberrations being frequently observed in tumors. Phosphorylates CDC25C and CHEK2. Also involved in deuterosome-mediated centriole amplification in multiciliated that can generate more than 100 centrioles. Also involved in trophoblast differentiation by phosphorylating HAND1, leading to disrupt the interaction between HAND1 and MDFIC and activate HAND1. Required for the recruitment of STIL to the centriole and for STIL-mediated centriole amplification. Phosphorylates CEP131 at 'Ser-78' and PCM1 at 'Ser-372' which is essential for proper organization and integrity of centriolar satellites. This chain is Serine/threonine-protein kinase PLK4, found in Mus musculus (Mouse).